The primary structure comprises 216 residues: 3-isopropylmalate dehydratase small subunit (216 aa).

The protein belongs to the LeuD family. LeuD type 1 subfamily. Heterodimer of LeuC and LeuD.

The catalysed reaction is (2R,3S)-3-isopropylmalate = (2S)-2-isopropylmalate. It participates in amino-acid biosynthesis; L-leucine biosynthesis; L-leucine from 3-methyl-2-oxobutanoate: step 2/4. In terms of biological role, catalyzes the isomerization between 2-isopropylmalate and 3-isopropylmalate, via the formation of 2-isopropylmaleate. This chain is 3-isopropylmalate dehydratase small subunit, found in Burkholderia ambifaria (strain MC40-6).